Here is a 287-residue protein sequence, read N- to C-terminus: Putative ABC transporter ATP-binding protein MM_1038 (287 aa).

Residues 5 to 238 enclose the ABC transporter domain; sequence LENISVFYSR…ENVPLPPVAS (234 aa). 40-47 lines the ATP pocket; sequence GEKGAGKS.

The protein belongs to the ABC transporter superfamily.

The protein resides in the cell membrane. Its function is as follows. Probably part of an ABC transporter complex. Responsible for energy coupling to the transport system. The polypeptide is Putative ABC transporter ATP-binding protein MM_1038 (Methanosarcina mazei (strain ATCC BAA-159 / DSM 3647 / Goe1 / Go1 / JCM 11833 / OCM 88) (Methanosarcina frisia)).